The chain runs to 298 residues: N-acetylmuramic acid 6-phosphate etherase (298 aa).

The SIS domain occupies 55 to 218; the sequence is IHAQVSGGGR…STGLMIKSGK (164 aa). The Proton donor role is filled by Glu83. Glu114 is an active-site residue.

The protein belongs to the GCKR-like family. MurNAc-6-P etherase subfamily. In terms of assembly, homodimer.

It carries out the reaction N-acetyl-D-muramate 6-phosphate + H2O = N-acetyl-D-glucosamine 6-phosphate + (R)-lactate. It participates in amino-sugar metabolism; 1,6-anhydro-N-acetylmuramate degradation. Its pathway is amino-sugar metabolism; N-acetylmuramate degradation. The protein operates within cell wall biogenesis; peptidoglycan recycling. Specifically catalyzes the cleavage of the D-lactyl ether substituent of MurNAc 6-phosphate, producing GlcNAc 6-phosphate and D-lactate. Together with AnmK, is also required for the utilization of anhydro-N-acetylmuramic acid (anhMurNAc) either imported from the medium or derived from its own cell wall murein, and thus plays a role in cell wall recycling. The protein is N-acetylmuramic acid 6-phosphate etherase of Shigella flexneri.